Here is a 649-residue protein sequence, read N- to C-terminus: 1-deoxy-D-xylulose-5-phosphate synthase 1 (649 aa).

Residues His79 and 120–122 (AHS) contribute to the thiamine diphosphate site. Asp151 contacts Mg(2+). Thiamine diphosphate contacts are provided by residues 152-153 (GS), Asn180, Tyr289, and Glu371. Asn180 is a binding site for Mg(2+).

Belongs to the transketolase family. DXPS subfamily. In terms of assembly, homodimer. The cofactor is Mg(2+). Thiamine diphosphate serves as cofactor.

The catalysed reaction is D-glyceraldehyde 3-phosphate + pyruvate + H(+) = 1-deoxy-D-xylulose 5-phosphate + CO2. It participates in metabolic intermediate biosynthesis; 1-deoxy-D-xylulose 5-phosphate biosynthesis; 1-deoxy-D-xylulose 5-phosphate from D-glyceraldehyde 3-phosphate and pyruvate: step 1/1. Its function is as follows. Catalyzes the acyloin condensation reaction between C atoms 2 and 3 of pyruvate and glyceraldehyde 3-phosphate to yield 1-deoxy-D-xylulose-5-phosphate (DXP). This is 1-deoxy-D-xylulose-5-phosphate synthase 1 from Zymomonas mobilis subsp. mobilis (strain ATCC 31821 / ZM4 / CP4).